The sequence spans 249 residues: Pyridoxine 5'-phosphate synthase (249 aa).

Asparagine 7 lines the 3-amino-2-oxopropyl phosphate pocket. Residue 9-10 (DH) coordinates 1-deoxy-D-xylulose 5-phosphate. Arginine 18 serves as a coordination point for 3-amino-2-oxopropyl phosphate. Residue histidine 43 is the Proton acceptor of the active site. 1-deoxy-D-xylulose 5-phosphate-binding residues include arginine 45 and histidine 50. Catalysis depends on glutamate 70, which acts as the Proton acceptor. Residue threonine 100 coordinates 1-deoxy-D-xylulose 5-phosphate. Histidine 190 functions as the Proton donor in the catalytic mechanism. 3-amino-2-oxopropyl phosphate is bound by residues glycine 191 and 212–213 (GH).

It belongs to the PNP synthase family. As to quaternary structure, homooctamer; tetramer of dimers.

The protein localises to the cytoplasm. The enzyme catalyses 3-amino-2-oxopropyl phosphate + 1-deoxy-D-xylulose 5-phosphate = pyridoxine 5'-phosphate + phosphate + 2 H2O + H(+). The protein operates within cofactor biosynthesis; pyridoxine 5'-phosphate biosynthesis; pyridoxine 5'-phosphate from D-erythrose 4-phosphate: step 5/5. Its function is as follows. Catalyzes the complicated ring closure reaction between the two acyclic compounds 1-deoxy-D-xylulose-5-phosphate (DXP) and 3-amino-2-oxopropyl phosphate (1-amino-acetone-3-phosphate or AAP) to form pyridoxine 5'-phosphate (PNP) and inorganic phosphate. The sequence is that of Pyridoxine 5'-phosphate synthase from Synechococcus sp. (strain CC9311).